Reading from the N-terminus, the 331-residue chain is UDP-GalNAc:beta-1,3-N-acetylgalactosaminyltransferase 1 (331 aa).

Residues 1-20 (MASALWTVLPSRMSLRSLQW) lie on the Cytoplasmic side of the membrane. A helical; Signal-anchor for type II membrane protein transmembrane segment spans residues 21-43 (SLLLLSLLSFLVMWYLSLPHYNV). Over 44–331 (IERVNWMYFY…VMLRNTTCHY (288 aa)) the chain is Lumenal. Residues Asn72, Asn154, Asn198, Asn212, and Asn326 are each glycosylated (N-linked (GlcNAc...) asparagine).

It belongs to the glycosyltransferase 31 family. Requires Mg(2+) as cofactor.

It is found in the golgi apparatus membrane. The enzyme catalyses a globoside Gb3Cer (d18:1(4E)) + UDP-N-acetyl-alpha-D-galactosamine = a globoside Gb4Cer (d18:1(4E)) + UDP + H(+). Its pathway is protein modification; protein glycosylation. In terms of biological role, transfers N-acetylgalactosamine onto globotriaosylceramide. Plays a critical role in preimplantation stage embryonic development. In Pongo abelii (Sumatran orangutan), this protein is UDP-GalNAc:beta-1,3-N-acetylgalactosaminyltransferase 1 (B3GALNT1).